The following is a 460-amino-acid chain: tRNA modification GTPase MnmE (460 aa).

Residues Arg-22, Glu-87, and Arg-126 each coordinate (6S)-5-formyl-5,6,7,8-tetrahydrofolate. Residues 222 to 381 enclose the TrmE-type G domain; that stretch reads GLKTAIIGKP…LENTIYNLVF (160 aa). Asn-232 contacts K(+). GTP is bound by residues 232–237, 251–257, and 276–279; these read NVGKSS, TDIPGTT, and DTAG. Ser-236 lines the Mg(2+) pocket. Thr-251, Ile-253, and Thr-256 together coordinate K(+). Residue Thr-257 participates in Mg(2+) binding. Lys-460 lines the (6S)-5-formyl-5,6,7,8-tetrahydrofolate pocket.

This sequence belongs to the TRAFAC class TrmE-Era-EngA-EngB-Septin-like GTPase superfamily. TrmE GTPase family. In terms of assembly, homodimer. Heterotetramer of two MnmE and two MnmG subunits. Requires K(+) as cofactor.

The protein localises to the cytoplasm. Its function is as follows. Exhibits a very high intrinsic GTPase hydrolysis rate. Involved in the addition of a carboxymethylaminomethyl (cmnm) group at the wobble position (U34) of certain tRNAs, forming tRNA-cmnm(5)s(2)U34. This chain is tRNA modification GTPase MnmE, found in Thermoanaerobacter sp. (strain X514).